We begin with the raw amino-acid sequence, 481 residues long: Glutamate--tRNA ligase (481 aa).

Residues 9 to 19 (PSPTGNLHIGT) carry the 'HIGH' region motif. The 'KMSKS' region motif lies at 247–251 (KLSKR). Position 250 (lysine 250) interacts with ATP.

Belongs to the class-I aminoacyl-tRNA synthetase family. Glutamate--tRNA ligase type 1 subfamily. In terms of assembly, monomer.

It is found in the cytoplasm. It catalyses the reaction tRNA(Glu) + L-glutamate + ATP = L-glutamyl-tRNA(Glu) + AMP + diphosphate. Functionally, catalyzes the attachment of glutamate to tRNA(Glu) in a two-step reaction: glutamate is first activated by ATP to form Glu-AMP and then transferred to the acceptor end of tRNA(Glu). The sequence is that of Glutamate--tRNA ligase from Nostoc punctiforme (strain ATCC 29133 / PCC 73102).